The chain runs to 171 residues: Ly6/PLAUR domain-containing protein 6 (171 aa).

Positions 1–25 (MEPSPALAWLLLLSLVADCLKAAQS) are cleaved as a signal peptide. The 95-residue stretch at 47–141 (FKCFTCEKAA…PRNETDATFA (95 aa)) folds into the UPAR/Ly6 domain. 6 disulfides stabilise this stretch: Cys49–Cys77, Cys52–Cys61, Cys70–Cys96, Cys102–Cys121, Cys107–Cys118, and Cys122–Cys127. The NxI motif motif lies at 88 to 90 (NSI). N-linked (GlcNAc...) asparagine glycosylation is found at Asn134 and Asn147. Asn147 carries GPI-anchor amidated asparagine lipidation. A propeptide spans 148 to 171 (QTNGHPHCVSVIVSCLWVWLGLTL) (removed in mature form).

Interacts with nicotinic acetylcholine receptors (nAChRs) including CHRNA3, CHRNA4, CHRNA5, CHRNA6, CHRNA7, CHRNB2 and CHRNB4. Interacts (via NxI motif) with LRP6. Detected in the frontal cortex and hippocampus (at protein level). Highly expressed in the brain and spinal cord, as well as dorsal root and trigeminal ganglia.

The protein localises to the secreted. It localises to the cytoplasm. It is found in the cell membrane. Its subcellular location is the synapse. The protein resides in the synaptosome. The protein localises to the membrane raft. It localises to the cell projection. It is found in the dendrite. Its subcellular location is the perikaryon. Functionally, acts as a modulator of nicotinic acetylcholine receptors (nAChRs) function in the brain. Inhibits nicotine-induced Ca(2+) influx through nAChRs. In vitro, specifically inhibits alpha-3:beta-4 and alpha-7 nAChR currents in an allosteric manner. Acts as a positive regulator of Wnt/beta-catenin signaling. This Mus musculus (Mouse) protein is Ly6/PLAUR domain-containing protein 6 (Lypd6).